A 499-amino-acid polypeptide reads, in one-letter code: Putative ribose/galactose/methyl galactoside import ATP-binding protein 3 (499 aa).

ABC transporter domains follow at residues 8–243 and 253–497; these read LRMR…VGRE and SKIG…TGEE. 40-47 contacts ATP; the sequence is GENGAGKS.

Belongs to the ABC transporter superfamily. Carbohydrate importer 2 (CUT2) (TC 3.A.1.2) family.

It localises to the cell inner membrane. It carries out the reaction D-ribose(out) + ATP + H2O = D-ribose(in) + ADP + phosphate + H(+). It catalyses the reaction D-galactose(out) + ATP + H2O = D-galactose(in) + ADP + phosphate + H(+). Functionally, part of an ABC transporter complex involved in carbohydrate import. Could be involved in ribose, galactose and/or methyl galactoside import. Responsible for energy coupling to the transport system. This chain is Putative ribose/galactose/methyl galactoside import ATP-binding protein 3, found in Agrobacterium fabrum (strain C58 / ATCC 33970) (Agrobacterium tumefaciens (strain C58)).